The following is a 207-amino-acid chain: Ribosomal RNA small subunit methyltransferase G (207 aa).

S-adenosyl-L-methionine-binding positions include Gly-74, Leu-79, Val-125 to Glu-126, and Arg-140.

The protein belongs to the methyltransferase superfamily. RNA methyltransferase RsmG family.

The protein localises to the cytoplasm. It catalyses the reaction guanosine(527) in 16S rRNA + S-adenosyl-L-methionine = N(7)-methylguanosine(527) in 16S rRNA + S-adenosyl-L-homocysteine. Its function is as follows. Specifically methylates the N7 position of guanine in position 527 of 16S rRNA. This is Ribosomal RNA small subunit methyltransferase G from Shewanella pealeana (strain ATCC 700345 / ANG-SQ1).